The primary structure comprises 369 residues: 3,7-dimethylxanthine N-methyltransferase TCS1 (369 aa).

Position 24 (Tyr-24) interacts with S-adenosyl-L-homocysteine. Thr-31 serves as a coordination point for caffeine. Positions 66, 71, 103, 104, 138, and 139 each coordinate S-adenosyl-L-homocysteine. Caffeine contacts are provided by Tyr-156, His-159, and Trp-160. Asn-177 provides a ligand contact to Mg(2+). Caffeine is bound at residue Arg-225. Mg(2+) is bound by residues Asp-263, Phe-265, and Asn-266. Position 321 (Phe-321) interacts with caffeine.

It belongs to the methyltransferase superfamily. Type-7 methyltransferase family. The cofactor is Mg(2+).

The enzyme catalyses 1,7-dimethylxanthine + S-adenosyl-L-methionine = caffeine + S-adenosyl-L-homocysteine + H(+). It carries out the reaction theobromine + S-adenosyl-L-methionine = caffeine + S-adenosyl-L-homocysteine + H(+). It catalyses the reaction 7-methylxanthine + S-adenosyl-L-methionine = theobromine + S-adenosyl-L-homocysteine + H(+). It functions in the pathway alkaloid biosynthesis. Functionally, involved in the biosynthesis of caffeine in cv. Puer. Involved in the biosynthesis of theacrine in cv. Kucha, a caffeine-like xanthine alkaloid with diverse beneficial biological activities including anti-depressive, sedative, and hypnotic activities, improving learning and memory, increasing exercise activity, and preventing nonalcoholic fatty liver disease. Catalyzes the conversion of 7-methylxanthine (7mX) to theobromine and of theobromine to caffeine. Has 3-N- and 1-N-methylation activity. The chain is 3,7-dimethylxanthine N-methyltransferase TCS1 from Camellia sinensis var. assamica (Assam tea).